A 1158-amino-acid chain; its full sequence is ATP-dependent helicase/deoxyribonuclease subunit B (1158 aa).

The 275-residue stretch at 1–275 (MTLHAYLGRA…QYFNQLYRFN (275 aa)) folds into the UvrD-like helicase ATP-binding domain. 8 to 15 (GRAGTGKS) is a binding site for ATP. In terms of domain architecture, UvrD-like helicase C-terminal spans 269–583 (NQLYRFNNQD…SIGTMDLAKV (315 aa)). The [4Fe-4S] cluster site is built by Cys784, Cys1112, Cys1115, and Cys1121.

It belongs to the helicase family. AddB/RexB type 1 subfamily. In terms of assembly, heterodimer of AddA and AddB. Mg(2+) serves as cofactor. The cofactor is [4Fe-4S] cluster.

Functionally, the heterodimer acts as both an ATP-dependent DNA helicase and an ATP-dependent, dual-direction single-stranded exonuclease. Recognizes the chi site generating a DNA molecule suitable for the initiation of homologous recombination. The AddB subunit has 5' -&gt; 3' nuclease activity but not helicase activity. The sequence is that of ATP-dependent helicase/deoxyribonuclease subunit B from Staphylococcus aureus (strain MW2).